Reading from the N-terminus, the 905-residue chain is DNA mismatch repair protein MutS (905 aa).

A disordered region spans residues 389–410 (ERPANPEGTYPTDAETSGDTLP). ATP is bound at residue 638-645 (GPNMAGKS). The interval 826 to 847 (RDAARGTNSAPSRQTLPGLDLP) is disordered. Over residues 831 to 840 (GTNSAPSRQT) the composition is skewed to polar residues.

Belongs to the DNA mismatch repair MutS family.

Its function is as follows. This protein is involved in the repair of mismatches in DNA. It is possible that it carries out the mismatch recognition step. This protein has a weak ATPase activity. This is DNA mismatch repair protein MutS from Nitratidesulfovibrio vulgaris (strain ATCC 29579 / DSM 644 / CCUG 34227 / NCIMB 8303 / VKM B-1760 / Hildenborough) (Desulfovibrio vulgaris).